The sequence spans 149 residues: Transcriptional regulator MraZ (149 aa).

SpoVT-AbrB domains are found at residues 6–52 and 81–124; these read RSHR…PYPD and AEEM…DQSK.

This sequence belongs to the MraZ family. Forms oligomers.

It is found in the cytoplasm. The protein localises to the nucleoid. This Nitratidesulfovibrio vulgaris (strain ATCC 29579 / DSM 644 / CCUG 34227 / NCIMB 8303 / VKM B-1760 / Hildenborough) (Desulfovibrio vulgaris) protein is Transcriptional regulator MraZ.